A 556-amino-acid chain; its full sequence is Arginine--tRNA ligase 2 (556 aa).

Positions 132-142 (ANPTGDLHLGH) match the 'HIGH' region motif.

This sequence belongs to the class-I aminoacyl-tRNA synthetase family. In terms of assembly, monomer.

Its subcellular location is the cytoplasm. It catalyses the reaction tRNA(Arg) + L-arginine + ATP = L-arginyl-tRNA(Arg) + AMP + diphosphate. In Bacillus thuringiensis subsp. konkukian (strain 97-27), this protein is Arginine--tRNA ligase 2.